Consider the following 237-residue polypeptide: Phosphoribosylaminoimidazole-succinocarboxamide synthase (237 aa).

Belongs to the SAICAR synthetase family.

It catalyses the reaction 5-amino-1-(5-phospho-D-ribosyl)imidazole-4-carboxylate + L-aspartate + ATP = (2S)-2-[5-amino-1-(5-phospho-beta-D-ribosyl)imidazole-4-carboxamido]succinate + ADP + phosphate + 2 H(+). The protein operates within purine metabolism; IMP biosynthesis via de novo pathway; 5-amino-1-(5-phospho-D-ribosyl)imidazole-4-carboxamide from 5-amino-1-(5-phospho-D-ribosyl)imidazole-4-carboxylate: step 1/2. In Salmonella agona (strain SL483), this protein is Phosphoribosylaminoimidazole-succinocarboxamide synthase.